We begin with the raw amino-acid sequence, 299 residues long: uncharacterized protein (299 aa).

A disordered region spans residues 1-38 (MSLDSNSDTEFELVPKFQTQPTRGDAPKSPELEEVSTV).

The protein belongs to the calycin superfamily. Fatty-acid binding protein (FABP) family.

This is an uncharacterized protein from Caenorhabditis elegans.